Here is a 1358-residue protein sequence, read N- to C-terminus: MIDDENLNGKEPFLKKENQLLFFLNGEKVLINEPNPELSTLDYIRSIGLTGLKRGCSEGACGSCTFMLSNVVKDDNDTFRIVHRAVNGCLYPLCALDGMAVTTIEGLGNIDKGLHSIQERISENSGSQCGFCTPGIIMALYAFLRSNPNSTQKDIEQNFDGNLCRCTGYRPILDAAKSFANQPSDEQLVELPLPPMATIDDKKDDTQMICPGTGKPCNCKTKTSHIPNKPMELNSEPIFPPFLMEYKKESLKFTGSRVTWYTPTTLEELLKIKKEKTNAKIVVGNTEIGIETRFRSIVYPTIICPTRVEELIQIQKEDNGVRVGASVTLTEMKSYLNGIIKSSENDEIANKKNGTFKAIISQLKWFAGNQVRNAASIGGNLCTASPISDLNPVLLAAGAVLTMVSLDDNGAKVRRQVPINQFFLRYRVVDIKPEEILESVFIPYTRPLEFIQAYKQSRRREDDIAIVSCCFRVLLEPIAESASNTVDSNFKIKDCVLAYGGMNVKAVTCEKTEKQLIGSVWSRELLNDACLNLESDLPLAAGAPGGMIEYRRSLTTGFFFKYFLTVSKQLYQISNGNPLYLVSDKEKSATDAYSRPLSFGEQNYQTQPDKHPITQPIKHQSADKQVTGEALYVDDVKMKSLYAVMVPSLKAHANIKSVDASKALKAPGVKAFFSAKDIPGINDCGPVIHDEEVFVTKTALFHGAPIGCIVAETHIQALEASKLVAIEYEELPAITSIEDAISKQSFFPFTHLLKDGDMEKGWSESDHIIDGEFKVGAQEHFYLEPNGTLVIPGEGKELTVISSTQNPTKTQAIVASVLGIGQNQVVCKLKRLGGGFGGKETRSIFSSCVAAIASYHMKEPVRIILDRDTDMSTTGTRHPFIARYRVGFTKEGLIKALDLELYADAGFSYDISVGVLDRAIFHSENSYKIPNVNILGRLCKTNLPSNTAFRGYGGPQAMIICENWVEKISKTLGMDSYKIRELNFYKEAEVTAYRQSVVNNMMKRVWDELMVKSNYHQRLIAVEKFNKENRYKKRGISIIPTKFGMSFTVKTLNQAGALVHVYTDGTILVTHGGTEMGQGLNTKMIQIAARAFNVPVSDVFISETSTDKVPNTAPTAASVSSDLNGMAVLDACQQILLRMEPIREKNPNVPFKQLCTLCFVERVNLSANGFYATPNVGYMFKDSGVGEGTPFNYFNFGAACSEVEIDTLTGDHTTLRSDVILDVGDSLNPTIDIGQVEGAFVQGMGWSTLEEVVTFPSGYMFTRGPSTYKIPGFNDVPIEFNVSLLGDAPNPKAIHSSKGVGEPPLFLGSSVYFAIRQAITAARLENNLTNWFDLQSPATCERIRTSCLDNFVLQFRKQ.

One can recognise a 2Fe-2S ferredoxin-type domain in the interval 18–107; it reads NQLLFFLNGE…GMAVTTIEGL (90 aa). [2Fe-2S] cluster-binding residues include C56, C61, C64, C89, C129, C132, C164, and C166. The 195-residue stretch at 253-447 folds into the FAD-binding PCMH-type domain; sequence FTGSRVTWYT…ESVFIPYTRP (195 aa). FAD-binding positions include 281–288, F366, 376–380, D389, L437, and K455; these read IVVGNTEI and SIGGN. Mo-molybdopterin is bound by residues Q805 and F836. 2 residues coordinate substrate: E840 and R918. Residue R950 coordinates Mo-molybdopterin. The substrate site is built by Y952 and T1048. Residue A1117 participates in Mo-molybdopterin binding. The Proton acceptor role is filled by E1302.

It belongs to the xanthine dehydrogenase family. Homodimer. Requires FAD as cofactor. Mo-molybdopterin is required as a cofactor. It depends on [2Fe-2S] cluster as a cofactor.

It is found in the peroxisome. The catalysed reaction is xanthine + NAD(+) + H2O = urate + NADH + H(+). It carries out the reaction hypoxanthine + NAD(+) + H2O = xanthine + NADH + H(+). Functionally, key enzyme in purine degradation. Catalyzes the oxidation of hypoxanthine to xanthine. Catalyzes the oxidation of xanthine to uric acid. This is Xanthine dehydrogenase (xdh) from Dictyostelium discoideum (Social amoeba).